Here is a 137-residue protein sequence, read N- to C-terminus: Large ribosomal subunit protein uL16 (137 aa).

This sequence belongs to the universal ribosomal protein uL16 family. As to quaternary structure, part of the 50S ribosomal subunit.

In terms of biological role, binds 23S rRNA and is also seen to make contacts with the A and possibly P site tRNAs. This Rhodopseudomonas palustris (strain HaA2) protein is Large ribosomal subunit protein uL16.